A 266-amino-acid polypeptide reads, in one-letter code: 3-methyl-2-oxobutanoate hydroxymethyltransferase 2 (266 aa).

Positions 45 and 84 each coordinate Mg(2+). Residues 45–46 (DS), Asp-84, and Lys-112 each bind 3-methyl-2-oxobutanoate. Residue Glu-114 participates in Mg(2+) binding. The Proton acceptor role is filled by Glu-181.

This sequence belongs to the PanB family. As to quaternary structure, homodecamer; pentamer of dimers. Requires Mg(2+) as cofactor.

It localises to the cytoplasm. It catalyses the reaction 3-methyl-2-oxobutanoate + (6R)-5,10-methylene-5,6,7,8-tetrahydrofolate + H2O = 2-dehydropantoate + (6S)-5,6,7,8-tetrahydrofolate. It functions in the pathway cofactor biosynthesis; (R)-pantothenate biosynthesis; (R)-pantoate from 3-methyl-2-oxobutanoate: step 1/2. Its function is as follows. Catalyzes the reversible reaction in which hydroxymethyl group from 5,10-methylenetetrahydrofolate is transferred onto alpha-ketoisovalerate to form ketopantoate. In Pseudomonas aeruginosa (strain ATCC 15692 / DSM 22644 / CIP 104116 / JCM 14847 / LMG 12228 / 1C / PRS 101 / PAO1), this protein is 3-methyl-2-oxobutanoate hydroxymethyltransferase 2.